The sequence spans 100 residues: Large ribosomal subunit protein uL23 (100 aa).

Belongs to the universal ribosomal protein uL23 family. As to quaternary structure, part of the 50S ribosomal subunit. Contacts protein L29, and trigger factor when it is bound to the ribosome.

One of the early assembly proteins it binds 23S rRNA. One of the proteins that surrounds the polypeptide exit tunnel on the outside of the ribosome. Forms the main docking site for trigger factor binding to the ribosome. This chain is Large ribosomal subunit protein uL23, found in Novosphingobium aromaticivorans (strain ATCC 700278 / DSM 12444 / CCUG 56034 / CIP 105152 / NBRC 16084 / F199).